The primary structure comprises 546 residues: Chaperonin GroEL (546 aa).

ATP contacts are provided by residues 29 to 32 (TLGP), Lys50, 86 to 90 (DGTTT), Gly414, 477 to 479 (NAL), and Asp493. The segment at 522–546 (KPEKDAPNPMAGMGGGGMGGMGGMM) is disordered. Residues 533–546 (GMGGGGMGGMGGMM) are compositionally biased toward gly residues.

This sequence belongs to the chaperonin (HSP60) family. As to quaternary structure, forms a cylinder of 14 subunits composed of two heptameric rings stacked back-to-back. Interacts with the co-chaperonin GroES.

The protein resides in the cytoplasm. The catalysed reaction is ATP + H2O + a folded polypeptide = ADP + phosphate + an unfolded polypeptide.. Together with its co-chaperonin GroES, plays an essential role in assisting protein folding. The GroEL-GroES system forms a nano-cage that allows encapsulation of the non-native substrate proteins and provides a physical environment optimized to promote and accelerate protein folding. In Leptospira borgpetersenii serovar Hardjo-bovis (strain JB197), this protein is Chaperonin GroEL.